Here is a 241-residue protein sequence, read N- to C-terminus: MAPK phosphothreonine lyase (241 aa).

Catalysis depends on His-106, which acts as the Proton donor. Residue Lys-136 is the Proton acceptor of the active site.

The protein belongs to the phosphothreonine lyase family.

The protein resides in the secreted. In terms of biological role, secreted effector that irreversibly inactivates host MAP kinases by catalyzing the dephosphorylation of the phosphothreonine residue in the pT-X-pY motif present in MAPKs, via a beta-elimination reaction leading to a dehydrobutyrine residue. In Salmonella enteritidis, this protein is MAPK phosphothreonine lyase (spvC).